The sequence spans 335 residues: Acetyl-coenzyme A carboxylase carboxyl transferase subunit alpha (335 aa).

The 255-residue stretch at 38–292 folds into the CoA carboxyltransferase C-terminal domain; that stretch reads TLEQKAEELR…ATALSEEIEN (255 aa).

It belongs to the AccA family. As to quaternary structure, acetyl-CoA carboxylase is a heterohexamer composed of biotin carboxyl carrier protein (AccB), biotin carboxylase (AccC) and two subunits each of ACCase subunit alpha (AccA) and ACCase subunit beta (AccD).

It is found in the cytoplasm. The catalysed reaction is N(6)-carboxybiotinyl-L-lysyl-[protein] + acetyl-CoA = N(6)-biotinyl-L-lysyl-[protein] + malonyl-CoA. It functions in the pathway lipid metabolism; malonyl-CoA biosynthesis; malonyl-CoA from acetyl-CoA: step 1/1. Functionally, component of the acetyl coenzyme A carboxylase (ACC) complex. First, biotin carboxylase catalyzes the carboxylation of biotin on its carrier protein (BCCP) and then the CO(2) group is transferred by the carboxyltransferase to acetyl-CoA to form malonyl-CoA. This is Acetyl-coenzyme A carboxylase carboxyl transferase subunit alpha from Heliobacterium modesticaldum (strain ATCC 51547 / Ice1).